Reading from the N-terminus, the 169-residue chain is Crossover junction endodeoxyribonuclease RuvC (169 aa).

Residues D11, E71, and D143 contribute to the active site. Positions 11, 71, and 143 each coordinate Mg(2+).

Belongs to the RuvC family. In terms of assembly, homodimer which binds Holliday junction (HJ) DNA. The HJ becomes 2-fold symmetrical on binding to RuvC with unstacked arms; it has a different conformation from HJ DNA in complex with RuvA. In the full resolvosome a probable DNA-RuvA(4)-RuvB(12)-RuvC(2) complex forms which resolves the HJ. The cofactor is Mg(2+).

It localises to the cytoplasm. The catalysed reaction is Endonucleolytic cleavage at a junction such as a reciprocal single-stranded crossover between two homologous DNA duplexes (Holliday junction).. Its function is as follows. The RuvA-RuvB-RuvC complex processes Holliday junction (HJ) DNA during genetic recombination and DNA repair. Endonuclease that resolves HJ intermediates. Cleaves cruciform DNA by making single-stranded nicks across the HJ at symmetrical positions within the homologous arms, yielding a 5'-phosphate and a 3'-hydroxyl group; requires a central core of homology in the junction. The consensus cleavage sequence is 5'-(A/T)TT(C/G)-3'. Cleavage occurs on the 3'-side of the TT dinucleotide at the point of strand exchange. HJ branch migration catalyzed by RuvA-RuvB allows RuvC to scan DNA until it finds its consensus sequence, where it cleaves and resolves the cruciform DNA. The protein is Crossover junction endodeoxyribonuclease RuvC of Allorhizobium ampelinum (strain ATCC BAA-846 / DSM 112012 / S4) (Agrobacterium vitis (strain S4)).